Reading from the N-terminus, the 109-residue chain is Protein GOLVEN 5 (109 aa).

The signal sequence occupies residues 1 to 24 (MTNITSSFLCLLILLLFCLSFGYS). A propeptide spanning residues 25 to 96 (LHGDKDEVLS…EEDDLVAYTA (72 aa)) is cleaved from the precursor. The interval 54–88 (KKAQVRGRSGQEFSKETTKMMMKKTTKKETNVEEE) is disordered. Tyrosine 98 bears the Sulfotyrosine mark. Proline 106 bears the Hydroxyproline mark.

It belongs to the RGF family. Binds to LRR receptor-like serine/threonine-protein kinases RGI1, RGI2 and RGI3 to trigger their dimerization with SERK proteins and subsequent signaling. As to expression, expressed in root tips.

The protein localises to the secreted. Its function is as follows. Signaling peptide (root growth factor) that maintains the postembryonic root stem cell niche in a PIN2-traffic dependent manner. Root growth factor that regulates the pattern of root growth and lateral root development by modulating the length and the number of cortical cells in the root apical meristem (RAM), and the anticlinal asymmetric cell divisions in lateral root initiation cells. Influences the longitudinal growth rate in the primary root in response to phosphate ion (Pi)-deprivation. The sequence is that of Protein GOLVEN 5 from Arabidopsis thaliana (Mouse-ear cress).